The chain runs to 118 residues: Large ribosomal subunit protein bL20 (118 aa).

Belongs to the bacterial ribosomal protein bL20 family.

Binds directly to 23S ribosomal RNA and is necessary for the in vitro assembly process of the 50S ribosomal subunit. It is not involved in the protein synthesizing functions of that subunit. This chain is Large ribosomal subunit protein bL20, found in Agathobacter rectalis (strain ATCC 33656 / DSM 3377 / JCM 17463 / KCTC 5835 / VPI 0990) (Eubacterium rectale).